The chain runs to 120 residues: Phosphoribosyl-AMP cyclohydrolase (120 aa).

Position 75 (Asp75) interacts with Mg(2+). Residue Cys76 coordinates Zn(2+). The Mg(2+) site is built by Asp77 and Asp79. Zn(2+) contacts are provided by Cys92 and Cys99.

The protein belongs to the PRA-CH family. Homodimer. Mg(2+) is required as a cofactor. Zn(2+) serves as cofactor.

It localises to the cytoplasm. It carries out the reaction 1-(5-phospho-beta-D-ribosyl)-5'-AMP + H2O = 1-(5-phospho-beta-D-ribosyl)-5-[(5-phospho-beta-D-ribosylamino)methylideneamino]imidazole-4-carboxamide. Its pathway is amino-acid biosynthesis; L-histidine biosynthesis; L-histidine from 5-phospho-alpha-D-ribose 1-diphosphate: step 3/9. Its function is as follows. Catalyzes the hydrolysis of the adenine ring of phosphoribosyl-AMP. This Methanosarcina mazei (strain ATCC BAA-159 / DSM 3647 / Goe1 / Go1 / JCM 11833 / OCM 88) (Methanosarcina frisia) protein is Phosphoribosyl-AMP cyclohydrolase.